A 97-amino-acid chain; its full sequence is Large ribosomal subunit protein bL28 (97 aa).

The protein belongs to the bacterial ribosomal protein bL28 family.

The polypeptide is Large ribosomal subunit protein bL28 (Rickettsia africae (strain ESF-5)).